A 493-amino-acid chain; its full sequence is Guanosine-5'-triphosphate,3'-diphosphate pyrophosphatase (493 aa).

The protein belongs to the GppA/Ppx family. GppA subfamily.

It catalyses the reaction guanosine 3'-diphosphate 5'-triphosphate + H2O = guanosine 3',5'-bis(diphosphate) + phosphate + H(+). The protein operates within purine metabolism; ppGpp biosynthesis; ppGpp from GTP: step 2/2. In terms of biological role, catalyzes the conversion of pppGpp to ppGpp. Guanosine pentaphosphate (pppGpp) is a cytoplasmic signaling molecule which together with ppGpp controls the 'stringent response', an adaptive process that allows bacteria to respond to amino acid starvation, resulting in the coordinated regulation of numerous cellular activities. The polypeptide is Guanosine-5'-triphosphate,3'-diphosphate pyrophosphatase (Salmonella gallinarum (strain 287/91 / NCTC 13346)).